A 161-amino-acid polypeptide reads, in one-letter code: Cytochrome c-type biogenesis protein CcmE (161 aa).

The Cytoplasmic segment spans residues 1–8 (MNPRRQKR). Residues 9 to 29 (LGIILAILIGVSATIGLMIYA) traverse the membrane as a helical; Signal-anchor for type II membrane protein segment. The Periplasmic segment spans residues 30–161 (LNQNMDLFYT…SEEQKQGSGQ (132 aa)). 2 residues coordinate heme: His-129 and Tyr-133.

Belongs to the CcmE/CycJ family.

It localises to the cell inner membrane. Its function is as follows. Heme chaperone required for the biogenesis of c-type cytochromes. Transiently binds heme delivered by CcmC and transfers the heme to apo-cytochromes in a process facilitated by CcmF and CcmH. The chain is Cytochrome c-type biogenesis protein CcmE from Vibrio vulnificus (strain CMCP6).